The chain runs to 309 residues: Malate dehydrogenase (309 aa).

Residues 9–14 and aspartate 33 each bind NAD(+); that span reads GAGFVG. Residues arginine 82 and arginine 88 each contribute to the substrate site. Residues asparagine 95 and 118–120 each bind NAD(+); that span reads VNN. Positions 120 and 151 each coordinate substrate. Histidine 175 serves as the catalytic Proton acceptor.

This sequence belongs to the LDH/MDH superfamily. MDH type 3 family.

The enzyme catalyses (S)-malate + NAD(+) = oxaloacetate + NADH + H(+). Its function is as follows. Catalyzes the reversible oxidation of malate to oxaloacetate. This Chloroflexus aggregans (strain MD-66 / DSM 9485) protein is Malate dehydrogenase.